Consider the following 210-residue polypeptide: Proteasome subunit beta 2 (210 aa).

Residues Met1–Gly12 constitute a propeptide, removed in mature form; by autocatalysis. Residue Thr13 is the Nucleophile of the active site.

It belongs to the peptidase T1B family. As to quaternary structure, the 20S proteasome core is composed of 14 alpha and 14 beta subunits that assemble into four stacked heptameric rings, resulting in a barrel-shaped structure. The two inner rings, each composed of seven catalytic beta subunits, are sandwiched by two outer rings, each composed of seven alpha subunits. The catalytic chamber with the active sites is on the inside of the barrel. Has a gated structure, the ends of the cylinder being occluded by the N-termini of the alpha-subunits. Is capped at one or both ends by the proteasome regulatory ATPase, PAN.

It is found in the cytoplasm. It catalyses the reaction Cleavage of peptide bonds with very broad specificity.. Its activity is regulated as follows. The formation of the proteasomal ATPase PAN-20S proteasome complex, via the docking of the C-termini of PAN into the intersubunit pockets in the alpha-rings, triggers opening of the gate for substrate entry. Interconversion between the open-gate and close-gate conformations leads to a dynamic regulation of the 20S proteasome proteolysis activity. Component of the proteasome core, a large protease complex with broad specificity involved in protein degradation. The chain is Proteasome subunit beta 2 from Cenarchaeum symbiosum (strain A).